Consider the following 396-residue polypeptide: Acetate kinase (396 aa).

Asparagine 8 serves as a coordination point for Mg(2+). Lysine 15 provides a ligand contact to ATP. Arginine 89 contributes to the substrate binding site. The active-site Proton donor/acceptor is aspartate 146. Residues 206–210, 280–282, and 328–332 contribute to the ATP site; these read HLGNG, DMR, and GVGEN. Glutamate 382 serves as a coordination point for Mg(2+).

This sequence belongs to the acetokinase family. In terms of assembly, homodimer. The cofactor is Mg(2+). Mn(2+) serves as cofactor.

It localises to the cytoplasm. The catalysed reaction is acetate + ATP = acetyl phosphate + ADP. It participates in metabolic intermediate biosynthesis; acetyl-CoA biosynthesis; acetyl-CoA from acetate: step 1/2. Catalyzes the formation of acetyl phosphate from acetate and ATP. Can also catalyze the reverse reaction. This chain is Acetate kinase, found in Clavibacter michiganensis subsp. michiganensis (strain NCPPB 382).